The sequence spans 668 residues: Chitin synthase 8 (668 aa).

Polar residues predominate over residues Met1–Gln26. A disordered region spans residues Met1–Leu62. N-linked (GlcNAc...) asparagine glycosylation is found at Asn21, Asn98, and Asn101. The next 2 membrane-spanning stretches (helical) occupy residues Trp136–Tyr156 and Phe162–Ile182. Residues Asn216 and Asn476 are each glycosylated (N-linked (GlcNAc...) asparagine). Helical transmembrane passes span Trp522 to Ile542, Leu548 to Leu568, Val583 to Phe603, and Tyr615 to Val635.

It belongs to the chitin synthase family. Class VIII subfamily.

The protein resides in the cell membrane. It localises to the cell septum. The catalysed reaction is [(1-&gt;4)-N-acetyl-beta-D-glucosaminyl](n) + UDP-N-acetyl-alpha-D-glucosamine = [(1-&gt;4)-N-acetyl-beta-D-glucosaminyl](n+1) + UDP + H(+). Its function is as follows. Polymerizes chitin, a structural polymer of the cell wall and septum, by transferring the sugar moiety of UDP-GlcNAc to the non-reducing end of the growing chitin polymer. Participated in the development of cell wall and plays a critical role in fungal response to environmental stresses. Necessary for pathogenicity and deoxinivalenol (DON) production. In Gibberella zeae (strain ATCC MYA-4620 / CBS 123657 / FGSC 9075 / NRRL 31084 / PH-1) (Wheat head blight fungus), this protein is Chitin synthase 8.